Consider the following 198-residue polypeptide: Alpha1-proteinase inhibitor-degradation deficient protein 37 (198 aa).

The residue at position 79 (Ser79) is a Phosphoserine.

It is found in the cytoplasm. Involved in ER-associated protein degradation (ERAD). This Saccharomyces cerevisiae (strain ATCC 204508 / S288c) (Baker's yeast) protein is Alpha1-proteinase inhibitor-degradation deficient protein 37 (ADD37).